A 390-amino-acid chain; its full sequence is Succinate--CoA ligase [ADP-forming] subunit beta (390 aa).

Positions 9-248 (KDILRKFGVT…TSEEDPFEVE (240 aa)) constitute an ATP-grasp domain. ATP-binding positions include lysine 50, 57 to 59 (GRG), glutamate 103, methionine 106, and glutamate 111. Positions 203 and 217 each coordinate Mg(2+). Substrate contacts are provided by residues asparagine 268 and 325 to 327 (GIV).

The protein belongs to the succinate/malate CoA ligase beta subunit family. In terms of assembly, heterotetramer of two alpha and two beta subunits. Mg(2+) is required as a cofactor.

It catalyses the reaction succinate + ATP + CoA = succinyl-CoA + ADP + phosphate. The catalysed reaction is GTP + succinate + CoA = succinyl-CoA + GDP + phosphate. The protein operates within carbohydrate metabolism; tricarboxylic acid cycle; succinate from succinyl-CoA (ligase route): step 1/1. Functionally, succinyl-CoA synthetase functions in the citric acid cycle (TCA), coupling the hydrolysis of succinyl-CoA to the synthesis of either ATP or GTP and thus represents the only step of substrate-level phosphorylation in the TCA. The beta subunit provides nucleotide specificity of the enzyme and binds the substrate succinate, while the binding sites for coenzyme A and phosphate are found in the alpha subunit. This is Succinate--CoA ligase [ADP-forming] subunit beta from Chlorobium chlorochromatii (strain CaD3).